The chain runs to 492 residues: Proline--tRNA ligase (492 aa).

It belongs to the class-II aminoacyl-tRNA synthetase family. ProS type 3 subfamily. In terms of assembly, homodimer.

It localises to the cytoplasm. It carries out the reaction tRNA(Pro) + L-proline + ATP = L-prolyl-tRNA(Pro) + AMP + diphosphate. In terms of biological role, catalyzes the attachment of proline to tRNA(Pro) in a two-step reaction: proline is first activated by ATP to form Pro-AMP and then transferred to the acceptor end of tRNA(Pro). This is Proline--tRNA ligase from Flavobacterium johnsoniae (strain ATCC 17061 / DSM 2064 / JCM 8514 / BCRC 14874 / CCUG 350202 / NBRC 14942 / NCIMB 11054 / UW101) (Cytophaga johnsonae).